A 377-amino-acid polypeptide reads, in one-letter code: Histone deacetylase 8 (377 aa).

The interval 14–324 (LVPVYIYSPE…WTYLTGVILG (311 aa)) is histone deacetylase. Residue S39 is modified to Phosphoserine. Residue D101 coordinates substrate. H143 (proton acceptor) is an active-site residue. G151 serves as a coordination point for substrate. The a divalent metal cation site is built by D178, H180, and D267. Residue Y306 participates in substrate binding.

Belongs to the histone deacetylase family. HD type 1 subfamily. In terms of assembly, interacts with PEPB2-MYH11, a fusion protein consisting of the 165 N-terminal residues of CBF-beta (PEPB2) with the tail region of MYH11 produced by the inversion Inv(16)(p13q22), a translocation associated with acute myeloid leukemia of M4EO subtype. The PEPB2-MYH1 fusion protein also interacts with RUNX1, a well known transcriptional regulator, suggesting that the interaction with HDAC8 may participate in the conversion of RUNX1 into a constitutive transcriptional repressor. Interacts with CBFA2T3. Interacts with phosphorylated SMG5/EST1B; this interaction protects SMG5 from ubiquitin-mediated degradation. Associates with alpha-SMA (smooth muscle alpha-actin). It depends on a divalent metal cation as a cofactor. In terms of processing, phosphorylated by PKA on serine 39. Phosphorylation reduces deacetylase activity observed preferentially on histones H3 and H4. As to expression, weakly expressed in most tissues. Expressed at higher level in heart, brain, kidney and pancreas and also in liver, lung, placenta, prostate and kidney.

It is found in the nucleus. It localises to the chromosome. The protein resides in the cytoplasm. It catalyses the reaction N(6)-acetyl-L-lysyl-[histone] + H2O = L-lysyl-[histone] + acetate. It carries out the reaction N(6)-acetyl-L-lysyl-[protein] + H2O = L-lysyl-[protein] + acetate. The catalysed reaction is N(6)-(2E)-butenoyl-L-lysyl-[protein] + H2O = (2E)-2-butenoate + L-lysyl-[protein]. Its activity is regulated as follows. Its activity is inhibited by trichostatin A (TSA), suberoylanilide hydroxamic acid (SAHA), 3-(1-methyl-4-phenylacetyl-1H-2-pyrrolyl)-N-hydroxy-2-propenamide (APHA), 4-dimethylamino-N-(6-hydroxycarbamoyethyl)benzamide-N-hydroxy-7-(4-dimethylaminobenzoyl)aminoheptanamide (MS-344), 5-(4-methyl-benzoylamino)-biphenyl-3,4'-dicarboxylic acid 3-dimethylamide 4'-hydroxyamide (CRA-A) and butyrate. Its function is as follows. Histone deacetylase that catalyzes the deacetylation of lysine residues on the N-terminal part of the core histones (H2A, H2B, H3 and H4). Histone deacetylation gives a tag for epigenetic repression and plays an important role in transcriptional regulation, cell cycle progression and developmental events. Histone deacetylases act via the formation of large multiprotein complexes. Also involved in the deacetylation of cohesin complex protein SMC3 regulating release of cohesin complexes from chromatin. May play a role in smooth muscle cell contractility. In addition to protein deacetylase activity, also has protein-lysine deacylase activity: acts as a protein decrotonylase by mediating decrotonylation ((2E)-butenoyl) of histones. This chain is Histone deacetylase 8, found in Homo sapiens (Human).